The sequence spans 343 residues: Malate dehydrogenase, peroxisomal (343 aa).

Residues 8 to 14 (GASGGVG) and Asp34 each bind NAD(+). 2 residues coordinate substrate: Arg80 and Arg86. NAD(+) is bound by residues Asn93 and 116-118 (ISN). Residues Asn118 and Arg152 each coordinate substrate. The Proton acceptor role is filled by His187. An NAD(+)-binding site is contributed by Met237.

This sequence belongs to the LDH/MDH superfamily. MDH type 1 family. In terms of assembly, homodimer.

Its subcellular location is the peroxisome. The enzyme catalyses (S)-malate + NAD(+) = oxaloacetate + NADH + H(+). The chain is Malate dehydrogenase, peroxisomal (MDH3) from Saccharomyces cerevisiae (strain ATCC 204508 / S288c) (Baker's yeast).